A 102-amino-acid polypeptide reads, in one-letter code: Large ribosomal subunit protein uL23 (102 aa).

Belongs to the universal ribosomal protein uL23 family. In terms of assembly, part of the 50S ribosomal subunit. Contacts protein L29, and trigger factor when it is bound to the ribosome.

Its function is as follows. One of the early assembly proteins it binds 23S rRNA. One of the proteins that surrounds the polypeptide exit tunnel on the outside of the ribosome. Forms the main docking site for trigger factor binding to the ribosome. The chain is Large ribosomal subunit protein uL23 from Cutibacterium acnes (strain DSM 16379 / KPA171202) (Propionibacterium acnes).